Consider the following 767-residue polypeptide: DNA topoisomerase 1 (767 aa).

The span at 1–23 (MSGDHLHNDSQIEADFRLNDSHK) shows a compositional bias: basic and acidic residues. The tract at residues 1–200 (MSGDHLHNDS…DNKKKKAKKE (200 aa)) is disordered. S2 is subject to N-acetylserine. A phosphoserine mark is found at S2 and S10. Residues 24–39 (HKDKHKDREHRHKEHK) are compositionally biased toward basic residues. The span at 40–110 (KDKDKDREKS…DAKIKKEKEN (71 aa)) shows a compositional bias: basic and acidic residues. Position 59 is a phosphoserine (S59). Residue K103 forms a Glycyl lysine isopeptide (Lys-Gly) (interchain with G-Cter in SUMO2) linkage. K105 participates in a covalent cross-link: Glycyl lysine isopeptide (Lys-Gly) (interchain with G-Cter in SUMO); alternate. K105 participates in a covalent cross-link: Glycyl lysine isopeptide (Lys-Gly) (interchain with G-Cter in SUMO2); alternate. S114 is subject to Phosphoserine. K119 participates in a covalent cross-link: Glycyl lysine isopeptide (Lys-Gly) (interchain with G-Cter in SUMO); alternate. Residue K119 forms a Glycyl lysine isopeptide (Lys-Gly) (interchain with G-Cter in SUMO2); alternate linkage. K119 is covalently cross-linked (Glycyl lysine isopeptide (Lys-Gly) (interchain with G-Cter in SUMO1); alternate). The segment covering 131–168 (PKEDIKPLKRPRDEDDADYKPKKIKTEDIKKEKKRKLE) has biased composition (basic and acidic residues). Residues K136 and K150 each participate in a glycyl lysine isopeptide (Lys-Gly) (interchain with G-Cter in SUMO2) cross-link. K155 is covalently cross-linked (Glycyl lysine isopeptide (Lys-Gly) (interchain with G-Cter in SUMO); alternate). A Glycyl lysine isopeptide (Lys-Gly) (interchain with G-Cter in SUMO2); alternate cross-link involves residue K155. Glycyl lysine isopeptide (Lys-Gly) (interchain with G-Cter in SUMO2) cross-links involve residues K160 and K166. K174 participates in a covalent cross-link: Glycyl lysine isopeptide (Lys-Gly) (interchain with G-Cter in SUMO2); alternate. K174 is modified (N6-acetyllysine; alternate). Residues 181 to 200 (KDKDKKVAEPDNKKKKAKKE) show a composition bias toward basic and acidic residues. A Glycyl lysine isopeptide (Lys-Gly) (interchain with G-Cter in SUMO2) cross-link involves residue K206. At K282 the chain carries N6-acetyllysine. K338 is covalently cross-linked (Glycyl lysine isopeptide (Lys-Gly) (interchain with G-Cter in SUMO2)). Interaction with DNA stretches follow at residues 427 to 428 (KY) and 490 to 495 (RAGNEK). The region spanning 434 to 767 (SSRIKGEKDW…IDMTDEDYEF (334 aa)) is the Topo IB-type catalytic domain. The residue at position 508 (S508) is a Phosphoserine; by CK2. A Glycyl lysine isopeptide (Lys-Gly) (interchain with G-Cter in SUMO2) cross-link involves residue K551. Positions 587-589 (TAK) are interaction with DNA. Glycyl lysine isopeptide (Lys-Gly) (interchain with G-Cter in SUMO2) cross-links involve residues K644, K702, and K714. Y725 (O-(3'-phospho-DNA)-tyrosine intermediate) is an active-site residue.

It belongs to the type IB topoisomerase family. Monomer. Interacts with ERCC6. Interacts with TPRN; TPRN interacts with a number of DNA damage response proteins, is recruited to sites of DNA damage and may play a role in DNA damage repair. Post-translationally, sumoylated. Lys-119 is the main site of sumoylation. Sumoylation plays a role in partitioning TOP1 between nucleoli and nucleoplasm. Levels are dramatically increased on camptothecin (CPT) treatment. In terms of processing, phosphorylation at Ser-508 by CK2 increases binding to supercoiled DNA and sensitivity to camptothecin.

The protein resides in the nucleus. It is found in the nucleolus. Its subcellular location is the nucleoplasm. The catalysed reaction is ATP-independent breakage of single-stranded DNA, followed by passage and rejoining.. Functionally, releases the supercoiling and torsional tension of DNA introduced during the DNA replication and transcription by transiently cleaving and rejoining one strand of the DNA duplex. Introduces a single-strand break via transesterification at a target site in duplex DNA. The scissile phosphodiester is attacked by the catalytic tyrosine of the enzyme, resulting in the formation of a DNA-(3'-phosphotyrosyl)-enzyme intermediate and the expulsion of a 5'-OH DNA strand. The free DNA strand then rotates around the intact phosphodiester bond on the opposing strand, thus removing DNA supercoils. Finally, in the religation step, the DNA 5'-OH attacks the covalent intermediate to expel the active-site tyrosine and restore the DNA phosphodiester backbone. Regulates the alternative splicing of tissue factor (F3) pre-mRNA in endothelial cells. Involved in the circadian transcription of the core circadian clock component BMAL1 by altering the chromatin structure around the ROR response elements (ROREs) on the BMAL1 promoter. This is DNA topoisomerase 1 (Top1) from Rattus norvegicus (Rat).